The chain runs to 531 residues: Zinc finger CCCH-type with G patch domain-containing protein (531 aa).

N-acetylmethionine is present on methionine 1. A disordered region spans residues 91 to 133; that stretch reads EAPAAARGSGSETVPKAEAGPESAAGGQEEEEGEDEEELSGTK. A compositionally biased stretch (low complexity) spans 107–117; that stretch reads AEAGPESAAGG. A compositionally biased stretch (acidic residues) spans 118-129; the sequence is QEEEEGEDEEEL. The C3H1-type zinc-finger motif lies at 175-201; that stretch reads KSLKPCPFFLEGKCRFKENCRFSHGQV. The tract at residues 267 to 289 is disordered; the sequence is PPLRTEATESDSDSDGTGDSSYA. The G-patch domain occupies 333–379; sequence TRGIGSRLLTKMGYEFGKGLGRHAEGRVEPIHAVVLPRGKSLDQCVE. Serine 373 is modified (phosphoserine). Disordered stretches follow at residues 385–409, 426–446, and 509–531; these read TRVG…GGRP, APGA…DMYH, and RAQE…MTEF. A compositionally biased stretch (low complexity) spans 426-438; sequence APGALEAGAAPAG. Residues 518 to 531 are compositionally biased toward basic and acidic residues; the sequence is EQRKADTHKKMTEF.

As to quaternary structure, interacts with CHD4/Mi-2; the interaction is direct. Ubiquitinated in case of infection by HIV-1, leading to its degradation. Ubiquitination is mediated by the CUL4A-RBX1-DDB1-DCAF1/VPRBP complex that is hijacked by HIV-1 via interaction between HIV-1 Vpr and DCAF1/VPRBP. Widely expressed.

It is found in the nucleus. Its function is as follows. Transcription repressor that specifically binds the 5'-GGAG[GA]A[GA]A-3' consensus sequence. Represses transcription by recruiting the chromatin multiprotein complex NuRD to target promoters. Negatively regulates expression of EGFR, a gene involved in cell proliferation, survival and migration. Its ability to repress genes of the EGFR pathway suggest it may act as a tumor suppressor. Able to suppress breast carcinogenesis. Functionally, antagonizes the transcription repression by isoform 1 by competing for the binding of the NuRD complex. Does not bind DNA. In Homo sapiens (Human), this protein is Zinc finger CCCH-type with G patch domain-containing protein (ZGPAT).